Reading from the N-terminus, the 404-residue chain is Chorismate synthase (404 aa).

2 residues coordinate NADP(+): arginine 40 and arginine 46. Residues 136–138 (RAS), 257–258 (QA), glycine 301, 316–320 (KPIST), and arginine 342 contribute to the FMN site.

Belongs to the chorismate synthase family. As to quaternary structure, homotetramer. FMNH2 is required as a cofactor.

The catalysed reaction is 5-O-(1-carboxyvinyl)-3-phosphoshikimate = chorismate + phosphate. The protein operates within metabolic intermediate biosynthesis; chorismate biosynthesis; chorismate from D-erythrose 4-phosphate and phosphoenolpyruvate: step 7/7. Catalyzes the anti-1,4-elimination of the C-3 phosphate and the C-6 proR hydrogen from 5-enolpyruvylshikimate-3-phosphate (EPSP) to yield chorismate, which is the branch point compound that serves as the starting substrate for the three terminal pathways of aromatic amino acid biosynthesis. This reaction introduces a second double bond into the aromatic ring system. This is Chorismate synthase from Mycolicibacterium vanbaalenii (strain DSM 7251 / JCM 13017 / BCRC 16820 / KCTC 9966 / NRRL B-24157 / PYR-1) (Mycobacterium vanbaalenii).